A 391-amino-acid chain; its full sequence is Phosphoglycerate kinase (391 aa).

Substrate contacts are provided by residues 21-23, arginine 36, 59-62, arginine 113, and arginine 146; these read DLN and HLGR. ATP-binding positions include lysine 197, glutamate 319, and 345-348; that span reads GGDT.

This sequence belongs to the phosphoglycerate kinase family. Monomer.

The protein resides in the cytoplasm. It carries out the reaction (2R)-3-phosphoglycerate + ATP = (2R)-3-phospho-glyceroyl phosphate + ADP. Its pathway is carbohydrate degradation; glycolysis; pyruvate from D-glyceraldehyde 3-phosphate: step 2/5. The chain is Phosphoglycerate kinase from Shewanella halifaxensis (strain HAW-EB4).